Here is a 211-residue protein sequence, read N- to C-terminus: Pyridoxine/pyridoxamine 5'-phosphate oxidase (211 aa).

Substrate is bound by residues arginine 7–tyrosine 10 and lysine 65. FMN is bound by residues arginine 60–lysine 65, phenylalanine 75–threonine 76, arginine 81, and lysine 82. Substrate contacts are provided by tyrosine 122, arginine 126, and serine 130. FMN is bound by residues glutamine 139–serine 140 and tryptophan 183. A substrate-binding site is contributed by arginine 189 to histidine 191. Residue arginine 193 coordinates FMN.

This sequence belongs to the pyridoxamine 5'-phosphate oxidase family. Homodimer. FMN serves as cofactor.

It carries out the reaction pyridoxamine 5'-phosphate + O2 + H2O = pyridoxal 5'-phosphate + H2O2 + NH4(+). The catalysed reaction is pyridoxine 5'-phosphate + O2 = pyridoxal 5'-phosphate + H2O2. The protein operates within cofactor metabolism; pyridoxal 5'-phosphate salvage; pyridoxal 5'-phosphate from pyridoxamine 5'-phosphate: step 1/1. It participates in cofactor metabolism; pyridoxal 5'-phosphate salvage; pyridoxal 5'-phosphate from pyridoxine 5'-phosphate: step 1/1. Functionally, catalyzes the oxidation of either pyridoxine 5'-phosphate (PNP) or pyridoxamine 5'-phosphate (PMP) into pyridoxal 5'-phosphate (PLP). This is Pyridoxine/pyridoxamine 5'-phosphate oxidase from Herminiimonas arsenicoxydans.